We begin with the raw amino-acid sequence, 77 residues long: U11-lycotoxin-Ls1b (77 aa).

Residues 1–20 form the signal peptide; sequence MKLIIFTGLALFAIVSLIEA. Positions 21 to 26 are excised as a propeptide; that stretch reads EEESGR.

This sequence belongs to the neurotoxin 19 (CSTX) family. 10 (U11-Lctx) subfamily. Contains 4 disulfide bonds. Expressed by the venom gland.

It localises to the secreted. This is U11-lycotoxin-Ls1b from Lycosa singoriensis (Wolf spider).